Reading from the N-terminus, the 258-residue chain is Acyl-[acyl-carrier-protein]--UDP-N-acetylglucosamine O-acyltransferase (258 aa).

Belongs to the transferase hexapeptide repeat family. LpxA subfamily. As to quaternary structure, homotrimer.

It localises to the cytoplasm. The catalysed reaction is a (3R)-hydroxyacyl-[ACP] + UDP-N-acetyl-alpha-D-glucosamine = a UDP-3-O-[(3R)-3-hydroxyacyl]-N-acetyl-alpha-D-glucosamine + holo-[ACP]. Its pathway is glycolipid biosynthesis; lipid IV(A) biosynthesis; lipid IV(A) from (3R)-3-hydroxytetradecanoyl-[acyl-carrier-protein] and UDP-N-acetyl-alpha-D-glucosamine: step 1/6. Involved in the biosynthesis of lipid A, a phosphorylated glycolipid that anchors the lipopolysaccharide to the outer membrane of the cell. This is Acyl-[acyl-carrier-protein]--UDP-N-acetylglucosamine O-acyltransferase from Pseudomonas putida (strain W619).